The primary structure comprises 273 residues: Petrobactin import ATP-binding protein FpuD (273 aa).

The 237-residue stretch at 5-241 folds into the ABC transporter domain; that stretch reads LETKRLTLSY…KLVRDVFRME (237 aa). An ATP-binding site is contributed by 37–44; that stretch reads GSNGCGKS.

It belongs to the ABC transporter superfamily. In terms of assembly, the complex is composed of two ATP-binding proteins (FpuD), two transmembrane proteins (FpuB) and a solute-binding protein (FpuA).

It is found in the cell membrane. It catalyses the reaction a Fe(III)-siderophore(out) + ATP + H2O = a Fe(III)-siderophore(in) + ADP + phosphate + H(+). Functionally, part of an ABC transporter complex involved in ferric-petrobactin uptake. Probably responsible for energy coupling to the transport system. The chain is Petrobactin import ATP-binding protein FpuD from Bacillus anthracis.